The chain runs to 1017 residues: DNA polymerase (1017 aa).

This sequence belongs to the DNA polymerase type-B family. Heterodimer with the terminal protein; this heterodimer binds to bp 9 to 18 of the genome. Forms a complex with viral pTP, DBP and hosts NFIA and POU2F1/OCT1 for initiation of replication.

The protein localises to the host nucleus. It carries out the reaction DNA(n) + a 2'-deoxyribonucleoside 5'-triphosphate = DNA(n+1) + diphosphate. Eukaryotic-type DNA polymerase involved in viral genomic replication. DNA synthesis is protein primed, and acts in a strand displacement replication. Assembles in complex with viral pTP, DBP, host NFIA and host POU2F1/OCT1 on viral origin of replication. The polymerase covalently transfers dCMP onto pTP, thereby initiating complementary strand synthesis. This chain is DNA polymerase, found in Bovine adenovirus 2 (BAdV-2).